A 135-amino-acid polypeptide reads, in one-letter code: MIVRDLAKEILTDRRVDSDGWSSVRLLLKDDGMGFSFHITTIHAGAELHMHYKNHLESVFCMEGTGSITDLATGETHEIRPGVMYALNKNDKHILRANAGAPMMMACVFNPPVTGKEVHGEDGAYPADAALENSA.

Belongs to the ectoine synthase family.

The catalysed reaction is (2S)-4-acetamido-2-aminobutanoate = L-ectoine + H2O. It functions in the pathway amine and polyamine biosynthesis; ectoine biosynthesis; L-ectoine from L-aspartate 4-semialdehyde: step 3/3. Catalyzes the circularization of gamma-N-acetyl-alpha,gamma-diaminobutyric acid (ADABA) to ectoine (1,4,5,6-tetrahydro-2-methyl-4-pyrimidine carboxylic acid), which is an excellent osmoprotectant. This chain is L-ectoine synthase, found in Hyphomonas neptunium (strain ATCC 15444).